Here is a 203-residue protein sequence, read N- to C-terminus: Histidine biosynthesis bifunctional protein HisIE (203 aa).

The segment at 1–114 (MLTEQQRREL…FGDTAHQWLF (114 aa)) is phosphoribosyl-AMP cyclohydrolase. The tract at residues 115 to 203 (LYQLEQLLAE…VIENLRKRHQ (89 aa)) is phosphoribosyl-ATP pyrophosphohydrolase.

It in the N-terminal section; belongs to the PRA-CH family. The protein in the C-terminal section; belongs to the PRA-PH family.

It is found in the cytoplasm. It carries out the reaction 1-(5-phospho-beta-D-ribosyl)-ATP + H2O = 1-(5-phospho-beta-D-ribosyl)-5'-AMP + diphosphate + H(+). It catalyses the reaction 1-(5-phospho-beta-D-ribosyl)-5'-AMP + H2O = 1-(5-phospho-beta-D-ribosyl)-5-[(5-phospho-beta-D-ribosylamino)methylideneamino]imidazole-4-carboxamide. It participates in amino-acid biosynthesis; L-histidine biosynthesis; L-histidine from 5-phospho-alpha-D-ribose 1-diphosphate: step 2/9. The protein operates within amino-acid biosynthesis; L-histidine biosynthesis; L-histidine from 5-phospho-alpha-D-ribose 1-diphosphate: step 3/9. The protein is Histidine biosynthesis bifunctional protein HisIE (hisI) of Escherichia coli (strain K12).